A 326-amino-acid chain; its full sequence is ELMO domain-containing protein 1 (326 aa).

An ELMO domain is found at 133-306 (QHEEMLLKLW…KFRKRIIKQL (174 aa)).

Functionally, acts as a GTPase-activating protein (GAP) toward guanine nucleotide exchange factors like ARL2, ARL3, ARF1 and ARF6, but not for GTPases outside the Arf family. The polypeptide is ELMO domain-containing protein 1 (ELMOD1) (Pongo abelii (Sumatran orangutan)).